The primary structure comprises 413 residues: MAPPSVFAEVPQAQPVLVFKLIADFREDPDPRKVNLGVGAYRTDDCQPWVLPVVRKVEQRIANDSSLNHEYLPILGLAEFRTCASRLALGDDSPALQEKRVGGVQSLGGTGALRIGAEFLARWYNGTNNKDTPVYVSSPTWENHNGVFTTAGFKDIRSYRYWDTEKRGLDLQGFLSDLENAPEFSIFVLHACAHNPTGTDPTPEQWKQIASVMKRRFLFPFFDSAYQGFASGNLEKDAWAIRYFVSEGFELFCAQSFSKNFGLYNERVGNLTVVAKEPDSILRVLSQMEKIVRVTWSNPPAQGARIVARTLSDPELFHEWTGNVKTMADRILSMRSELRARLEALKTPGTWNHITDQIGMFSFTGLNPKQVEYLINEKHIYLLPSGRINMCGLTTKNLDYVATSIHEAVTKIQ.

L-aspartate is bound by residues glycine 39, tryptophan 141, and asparagine 195. Position 259 is an N6-(pyridoxal phosphate)lysine (lysine 259). L-aspartate is bound at residue arginine 387.

This sequence belongs to the class-I pyridoxal-phosphate-dependent aminotransferase family. In terms of assembly, homodimer. Pyridoxal 5'-phosphate serves as cofactor.

It localises to the cytoplasm. It carries out the reaction L-aspartate + 2-oxoglutarate = oxaloacetate + L-glutamate. The catalysed reaction is L-cysteine + 2-oxoglutarate = 2-oxo-3-sulfanylpropanoate + L-glutamate. The enzyme catalyses (2S)-2-aminobutanoate + 2-oxoglutarate = 2-oxobutanoate + L-glutamate. It catalyses the reaction 3-sulfino-L-alanine + 2-oxoglutarate = 3-sulfinopyruvate + L-glutamate. In terms of biological role, biosynthesis of L-glutamate from L-aspartate or L-cysteine. Important regulator of levels of glutamate, the major excitatory neurotransmitter of the vertebrate central nervous system. Acts as a scavenger of glutamate in brain neuroprotection. The aspartate aminotransferase activity is involved in hepatic glucose synthesis during development and in adipocyte glyceroneogenesis. Using L-cysteine as substrate, regulates levels of mercaptopyruvate, an important source of hydrogen sulfide. Mercaptopyruvate is converted into H(2)S via the action of 3-mercaptopyruvate sulfurtransferase (3MST). Hydrogen sulfide is an important synaptic modulator and neuroprotectant in the brain. This is Aspartate aminotransferase, cytoplasmic from Sus scrofa (Pig).